A 376-amino-acid polypeptide reads, in one-letter code: DNA-directed RNA polymerase subunit alpha (376 aa).

The alpha N-terminal domain (alpha-NTD) stretch occupies residues 1-259 (MSDCSQNLLY…KHFSIFEKMD (259 aa)). Residues 276 to 376 (KDDILHKLVL…DKIRSKNGKG (101 aa)) are alpha C-terminal domain (alpha-CTD).

It belongs to the RNA polymerase alpha chain family. In terms of assembly, homodimer. The RNAP catalytic core consists of 2 alpha, 1 beta, 1 beta' and 1 omega subunit. When a sigma factor is associated with the core the holoenzyme is formed, which can initiate transcription.

The catalysed reaction is RNA(n) + a ribonucleoside 5'-triphosphate = RNA(n+1) + diphosphate. Functionally, DNA-dependent RNA polymerase catalyzes the transcription of DNA into RNA using the four ribonucleoside triphosphates as substrates. In Chlamydia abortus (strain DSM 27085 / S26/3) (Chlamydophila abortus), this protein is DNA-directed RNA polymerase subunit alpha.